The primary structure comprises 201 residues: Ribonuclease HII (201 aa).

One can recognise an RNase H type-2 domain in the interval leucine 10 to proline 200. Residues aspartate 16, glutamate 17, and aspartate 108 each contribute to the a divalent metal cation site.

This sequence belongs to the RNase HII family. Mn(2+) is required as a cofactor. The cofactor is Mg(2+).

Its subcellular location is the cytoplasm. It carries out the reaction Endonucleolytic cleavage to 5'-phosphomonoester.. In terms of biological role, endonuclease that specifically degrades the RNA of RNA-DNA hybrids. The polypeptide is Ribonuclease HII (Phocaeicola vulgatus (strain ATCC 8482 / DSM 1447 / JCM 5826 / CCUG 4940 / NBRC 14291 / NCTC 11154) (Bacteroides vulgatus)).